Reading from the N-terminus, the 323-residue chain is Serine/threonine-protein phosphatase PP1 (323 aa).

Mn(2+)-binding residues include D63, H65, D91, and N123. Residue H124 is the Proton donor of the active site. Positions 172 and 247 each coordinate Mn(2+).

It belongs to the PPP phosphatase family. PP-1 subfamily. The cofactor is Mn(2+).

The enzyme catalyses O-phospho-L-seryl-[protein] + H2O = L-seryl-[protein] + phosphate. It carries out the reaction O-phospho-L-threonyl-[protein] + H2O = L-threonyl-[protein] + phosphate. Plays an important role in the control of mitosis by reversing the action of the nimA kinase. This Emericella nidulans (strain FGSC A4 / ATCC 38163 / CBS 112.46 / NRRL 194 / M139) (Aspergillus nidulans) protein is Serine/threonine-protein phosphatase PP1 (bimG).